A 92-amino-acid chain; its full sequence is Small ribosomal subunit protein uS19c (92 aa).

The protein belongs to the universal ribosomal protein uS19 family.

The protein resides in the plastid. Its subcellular location is the chloroplast. Its function is as follows. Protein S19 forms a complex with S13 that binds strongly to the 16S ribosomal RNA. This Acorus calamus (Sweet flag) protein is Small ribosomal subunit protein uS19c.